The following is a 142-amino-acid chain: Large ribosomal subunit protein uL13 (142 aa).

This sequence belongs to the universal ribosomal protein uL13 family. Part of the 50S ribosomal subunit.

This protein is one of the early assembly proteins of the 50S ribosomal subunit, although it is not seen to bind rRNA by itself. It is important during the early stages of 50S assembly. This chain is Large ribosomal subunit protein uL13, found in Glaesserella parasuis serovar 5 (strain SH0165) (Haemophilus parasuis).